The primary structure comprises 107 residues: Integration host factor subunit beta (107 aa).

The disordered stretch occupies residues 78 to 107 (PHFKPGKELRERVDGRAGEPLKADEPDDER). The segment covering 82–101 (PGKELRERVDGRAGEPLKAD) has biased composition (basic and acidic residues).

It belongs to the bacterial histone-like protein family. In terms of assembly, heterodimer of an alpha and a beta chain.

In terms of biological role, this protein is one of the two subunits of integration host factor, a specific DNA-binding protein that functions in genetic recombination as well as in transcriptional and translational control. This chain is Integration host factor subunit beta, found in Burkholderia multivorans (strain ATCC 17616 / 249).